A 470-amino-acid polypeptide reads, in one-letter code: Cell division protein FtsA (470 aa).

Positions 416 to 470 (NKKDTHENEVESTDEEIYQSEDNHQEHKQNHEHVQDKDKDKEESKFKKLMKSLFE) are disordered. Residues 425 to 434 (VESTDEEIYQ) are compositionally biased toward acidic residues. A compositionally biased stretch (basic and acidic residues) spans 436 to 461 (EDNHQEHKQNHEHVQDKDKDKEESKF).

It belongs to the FtsA/MreB family. As to quaternary structure, self-interacts. Interacts with FtsZ.

The protein localises to the cell membrane. Its function is as follows. Cell division protein that is involved in the assembly of the Z ring. May serve as a membrane anchor for the Z ring. This chain is Cell division protein FtsA, found in Staphylococcus aureus (strain NCTC 8325 / PS 47).